A 444-amino-acid polypeptide reads, in one-letter code: ATP-dependent protease ATPase subunit HslU (444 aa).

Residues I18, 60–65, D256, E322, and R394 contribute to the ATP site; that span reads GVGKTE.

This sequence belongs to the ClpX chaperone family. HslU subfamily. A double ring-shaped homohexamer of HslV is capped on each side by a ring-shaped HslU homohexamer. The assembly of the HslU/HslV complex is dependent on binding of ATP.

The protein resides in the cytoplasm. Its function is as follows. ATPase subunit of a proteasome-like degradation complex; this subunit has chaperone activity. The binding of ATP and its subsequent hydrolysis by HslU are essential for unfolding of protein substrates subsequently hydrolyzed by HslV. HslU recognizes the N-terminal part of its protein substrates and unfolds these before they are guided to HslV for hydrolysis. The chain is ATP-dependent protease ATPase subunit HslU from Klebsiella pneumoniae (strain 342).